The chain runs to 1355 residues: DNA-directed RNA polymerase subunit beta' (1355 aa).

Zn(2+) contacts are provided by cysteine 219, cysteine 293, cysteine 300, and cysteine 303. The interval 1331-1355 (AEVEVDDEVDDDYEDDDEDDDDYED) is disordered.

The protein belongs to the RNA polymerase beta' chain family. RpoC2 subfamily. As to quaternary structure, in cyanobacteria the RNAP catalytic core is composed of 2 alpha, 1 beta, 1 beta', 1 gamma and 1 omega subunit. When a sigma factor is associated with the core the holoenzyme is formed, which can initiate transcription. It depends on Zn(2+) as a cofactor.

It catalyses the reaction RNA(n) + a ribonucleoside 5'-triphosphate = RNA(n+1) + diphosphate. DNA-dependent RNA polymerase catalyzes the transcription of DNA into RNA using the four ribonucleoside triphosphates as substrates. The chain is DNA-directed RNA polymerase subunit beta' from Trichormus variabilis (strain ATCC 29413 / PCC 7937) (Anabaena variabilis).